Reading from the N-terminus, the 230-residue chain is RNA chaperone ProQ (230 aa).

Residues 105 to 125 (EAKARVQAQREQHQAKKREAG) are compositionally biased toward basic and acidic residues. Residues 105–182 (EAKARVQAQR…EQRKPVTDTT (78 aa)) are disordered. A compositionally biased stretch (low complexity) spans 154-167 (PSRPQAARPASAPR). Over residues 168–178 (AESRVEQRKPV) the composition is skewed to basic and acidic residues.

Belongs to the ProQ family.

It localises to the cytoplasm. In terms of biological role, RNA chaperone with significant RNA binding, RNA strand exchange and RNA duplexing activities. May regulate ProP activity through an RNA-based, post-transcriptional mechanism. The polypeptide is RNA chaperone ProQ (Erwinia tasmaniensis (strain DSM 17950 / CFBP 7177 / CIP 109463 / NCPPB 4357 / Et1/99)).